An 873-amino-acid polypeptide reads, in one-letter code: Leucine--tRNA ligase (873 aa).

The 'HIGH' region motif lies at 47–57 (PYPSGKLHMGH). A 'KMSKS' region motif is present at residues 636–640 (KMSKS). Lys639 serves as a coordination point for ATP.

The protein belongs to the class-I aminoacyl-tRNA synthetase family.

The protein resides in the cytoplasm. It carries out the reaction tRNA(Leu) + L-leucine + ATP = L-leucyl-tRNA(Leu) + AMP + diphosphate. The protein is Leucine--tRNA ligase of Acinetobacter baylyi (strain ATCC 33305 / BD413 / ADP1).